Reading from the N-terminus, the 164-residue chain is Putative 4-hydroxy-4-methyl-2-oxoglutarate aldolase (164 aa).

Residues 80 to 83 and R102 contribute to the substrate site; that span reads GGNL. Residue D103 coordinates a divalent metal cation.

This sequence belongs to the class II aldolase/RraA-like family. As to quaternary structure, homotrimer. It depends on a divalent metal cation as a cofactor.

The catalysed reaction is 4-hydroxy-4-methyl-2-oxoglutarate = 2 pyruvate. The enzyme catalyses oxaloacetate + H(+) = pyruvate + CO2. In terms of biological role, catalyzes the aldol cleavage of 4-hydroxy-4-methyl-2-oxoglutarate (HMG) into 2 molecules of pyruvate. Also contains a secondary oxaloacetate (OAA) decarboxylase activity due to the common pyruvate enolate transition state formed following C-C bond cleavage in the retro-aldol and decarboxylation reactions. This is Putative 4-hydroxy-4-methyl-2-oxoglutarate aldolase from Paraburkholderia phymatum (strain DSM 17167 / CIP 108236 / LMG 21445 / STM815) (Burkholderia phymatum).